The sequence spans 619 residues: Polyadenylate-binding protein 1-like (619 aa).

4 RRM domains span residues 11–89 (ASLY…WSQR), 99–175 (GNIF…HFKS), 191–268 (TNIY…RAQK), and 294–370 (VNLY…LAQR). The disordered stretch occupies residues 431–458 (PAPRWTSQPPRPSSAYPPGASMVRPPVV). The PABC domain maps to 533 to 610 (QEPLTASMLA…AVAVLQAHQA (78 aa)).

It belongs to the polyadenylate-binding protein type-1 family. As to expression, expressed in ovary and testis. Also expressed in pancreas, liver and thymus, and at lower levels in other somatic tissues including brain and lung.

It localises to the cytoplasm. In terms of biological role, poly(A)-binding protein involved in oocyte maturation and early embryo development. It is required for cytosolic mRNA polyadenylation and translational activation of maternally stored mRNA in oocytes. This chain is Polyadenylate-binding protein 1-like, found in Homo sapiens (Human).